The sequence spans 341 residues: Fructose-1,6-bisphosphatase, cytosolic (341 aa).

Mg(2+)-binding residues include E71, E100, D121, L123, and D124. Residues 124–127 (DGSS), N215, Y247, Y267, and K277 contribute to the substrate site. Mg(2+) is bound at residue E283.

Belongs to the FBPase class 1 family. The cofactor is Mg(2+).

It is found in the cytoplasm. The protein localises to the nucleus. It catalyses the reaction beta-D-fructose 1,6-bisphosphate + H2O = beta-D-fructose 6-phosphate + phosphate. Functionally, catalyzes the first irreversible reaction from fructose-1,6-bisphosphate to fructose-6-phosphate and inorganic phosphate and plays an important regulatory role in sucrose biosynthesis and metabolism. Its activity is essential to regulate starch levels. Functions in fructose-mediated signaling independently of its catalytic activity in sugar metabolism. May act downstream of ABA2/GIN1, which is involved in abscisic acid (ABA) synthesis to regulate autotrophic transition and modulate early seedling establishment after seed germination. The chain is Fructose-1,6-bisphosphatase, cytosolic from Arabidopsis thaliana (Mouse-ear cress).